The chain runs to 92 residues: Small ribosomal subunit protein uS19c (92 aa).

The protein belongs to the universal ribosomal protein uS19 family.

It localises to the plastid. Protein S19 forms a complex with S13 that binds strongly to the 16S ribosomal RNA. This is Small ribosomal subunit protein uS19c from Cuscuta obtusiflora (Peruvian dodder).